A 119-amino-acid polypeptide reads, in one-letter code: Large ribosomal subunit protein bL19c (119 aa).

It belongs to the bacterial ribosomal protein bL19 family.

It is found in the plastid. Its subcellular location is the chloroplast. This Mesostigma viride (Green alga) protein is Large ribosomal subunit protein bL19c.